The primary structure comprises 620 residues: Glutathione-regulated potassium-efflux system protein KefC (620 aa).

Helical transmembrane passes span 4 to 24, 26 to 46, 54 to 74, 90 to 110, 114 to 134, 149 to 169, 178 to 198, 218 to 238, 270 to 290, 294 to 314, 327 to 347, and 359 to 379; these read HTLL…PIAV, LGLG…PWGL, SILH…GLEL, GALQ…FLGL, VAEL…MQAM, FAVL…IPLL, LGAF…VVLL, VFSA…EEVG, GLLL…GTLV, LRIL…LWLV, WFAV…GAAQ, and ALTL…VLLT. Residues 399-518 form the RCK N-terminal domain; the sequence is QPRVIVAGFG…AGVAMPERET (120 aa). Positions 599-620 are disordered; the sequence is QGTAEGKHSGEVADEPEVKPSI.

It belongs to the monovalent cation:proton antiporter 2 (CPA2) transporter (TC 2.A.37) family. KefC subfamily. As to quaternary structure, homodimer. Interacts with the regulatory subunit KefF.

The protein localises to the cell inner membrane. Pore-forming subunit of a potassium efflux system that confers protection against electrophiles. Catalyzes K(+)/H(+) antiport. This is Glutathione-regulated potassium-efflux system protein KefC from Salmonella agona (strain SL483).